A 199-amino-acid polypeptide reads, in one-letter code: Superoxide dismutase [Cu-Zn] (199 aa).

The N-terminal stretch at 1-22 (MKLTKVALFSLGLFGFSSMALA) is a signal peptide. 3 residues coordinate Cu cation: H92, H94, and H117. An intrachain disulfide couples C99 to C195. 4 residues coordinate Zn(2+): H117, H126, H135, and D138. H173 is a binding site for Cu cation.

The protein belongs to the Cu-Zn superoxide dismutase family. Homodimer. Requires Cu cation as cofactor. Zn(2+) is required as a cofactor.

The protein localises to the periplasm. It catalyses the reaction 2 superoxide + 2 H(+) = H2O2 + O2. Its function is as follows. Destroys radicals which are normally produced within the cells and which are toxic to biological systems. May play a role in the interactive biology of organisms with their hosts and so contribute to their capacity to cause disease. This chain is Superoxide dismutase [Cu-Zn] (sodC), found in Haemophilus ducreyi (strain 35000HP / ATCC 700724).